A 1058-amino-acid polypeptide reads, in one-letter code: Protein argonaute MEL1 (1058 aa).

Composition is skewed to gly residues over residues 1 to 12 and 24 to 37; these read MAYRGGGRGGRG and DVPG…GGGA. Disordered stretches follow at residues 1-77 and 115-147; these read MAYR…YGAP and RAPP…PSAT. Residues 48–70 are compositionally biased toward pro residues; sequence WPPPGMTPRPGPPQPQYPRPGPP. The span at 121–147 shows a compositional bias: low complexity; the sequence is HSSAPAPYQPAAAAPAPSSSSTAPSAT. A PAZ domain is found at 407–520; that stretch reads TVIQFVEEFL…LPMEVCKIVE (114 aa). The Piwi domain occupies 696 to 1016; sequence LLIVILPEVS…AAFRARYYVE (321 aa).

It belongs to the argonaute family. Ago subfamily.

It localises to the nucleus. The protein localises to the nucleolus. Its function is as follows. Essential for the progression of premeiotic mitosis and meiosis during sporogenesis. Regulates the cell division of premeiotic germ cells, the proper modification of meiotic chromosomes, and the faithful progression of meiosis, probably via small RNA-mediated gene silencing. May be involved in histone H3 'Lys-9' demethylation in the pericentromeric region. This chain is Protein argonaute MEL1 (MEL1), found in Oryza sativa subsp. japonica (Rice).